The chain runs to 106 residues: ATP-dependent Clp protease adapter protein ClpS (106 aa).

This sequence belongs to the ClpS family. Binds to the N-terminal domain of the chaperone ClpA.

Involved in the modulation of the specificity of the ClpAP-mediated ATP-dependent protein degradation. The polypeptide is ATP-dependent Clp protease adapter protein ClpS (Vibrio cholerae serotype O1 (strain ATCC 39541 / Classical Ogawa 395 / O395)).